Consider the following 333-residue polypeptide: Putative fimbrium anchoring subunit Fim4B (333 aa).

The N-terminal stretch at 1–20 (MRNTRYGFLVLLSSLLMLTG) is a signal peptide. Cysteine 21 carries the N-palmitoyl cysteine lipid modification. Cysteine 21 carries the S-diacylglycerol cysteine lipid modification. The disordered stretch occupies residues 274-333 (ENAGTGEDGKPTPPPEIELPPDDKIEVDKPETPPNPDGGGGMGGNVDGWGPEDNVELPVN). A compositionally biased stretch (basic and acidic residues) spans 294–304 (PDDKIEVDKPE). Residues 310-320 (DGGGGMGGNVD) show a composition bias toward gly residues.

The protein belongs to the bacteroidetes fimbrillin superfamily. FimB/Mfa2 family.

It is found in the cell outer membrane. Putative fimbrium anchoring subunit. In Bacteroides ovatus (strain ATCC 8483 / DSM 1896 / JCM 5824 / BCRC 10623 / CCUG 4943 / NCTC 11153), this protein is Putative fimbrium anchoring subunit Fim4B.